A 502-amino-acid chain; its full sequence is Packaging protein 1 (502 aa).

Residues 99 to 122 (EAMEGQNPTCSRHESAYPIQSQVS) are disordered. Residue 226-233 (GPTGCGKS) participates in ATP binding. The tract at residues 495–502 (RYYHSKKK) is DNA-binding.

The protein belongs to the adenoviridae packaging protein 1 family. Homodimer. Part of a genome packaging complex composed of packaging proteins 1, 2 and 3; this complex specifically binds to the packaging sequence on the left end of viral genomic DNA and performs packaging of the viral genome. Interacts with protein 33K.

Its subcellular location is the virion. It is found in the host nucleus. The protein localises to the host nucleoplasm. The protein resides in the host nucleolus. Functionally, component of the packaging machinery which encapsidates the viral DNA into preformed capsids and transcriptional activator of the viral major late promoter (MLP). Binds, along with packaging proteins 2 and 3, to the specific packaging sequence on the left end of viral genomic DNA and displays ATPase activity thereby providing the power stroke of the packaging machinery. The activity of packaging protein IVa2 is stimulated by protein 33K which acts as a terminase. May be the protein that pumps DNA into the capsid powered by ATP hydrolysis. Specifically binds to the 5'-CG-3' nucleotides of the repeats making up the packaging sequence. Component of the DEF-A and DEF-B transcription factors that bind downstream elements of the major late promoter (MLP), and stimulate transcription from the MLP after initiation of viral DNA replication. DEF-A is a heterodimer packaging proteins 1 and 2 and DEF-B is a homodimer of packaging protein 1. This chain is Packaging protein 1, found in Canis lupus familiaris (Dog).